We begin with the raw amino-acid sequence, 196 residues long: Peptidyl-tRNA hydrolase (196 aa).

A tRNA-binding site is contributed by tyrosine 18. Catalysis depends on histidine 23, which acts as the Proton acceptor. TRNA is bound by residues phenylalanine 69, asparagine 71, and asparagine 117.

It belongs to the PTH family. Monomer.

The protein resides in the cytoplasm. It carries out the reaction an N-acyl-L-alpha-aminoacyl-tRNA + H2O = an N-acyl-L-amino acid + a tRNA + H(+). Functionally, hydrolyzes ribosome-free peptidyl-tRNAs (with 1 or more amino acids incorporated), which drop off the ribosome during protein synthesis, or as a result of ribosome stalling. Catalyzes the release of premature peptidyl moieties from peptidyl-tRNA molecules trapped in stalled 50S ribosomal subunits, and thus maintains levels of free tRNAs and 50S ribosomes. The sequence is that of Peptidyl-tRNA hydrolase from Vibrio cholerae serotype O1 (strain ATCC 39315 / El Tor Inaba N16961).